The primary structure comprises 444 residues: L-cysteine:1D-myo-inositol 2-amino-2-deoxy-alpha-D-glucopyranoside ligase (444 aa).

Cysteine 66 contacts Zn(2+). L-cysteinyl-5'-AMP-binding positions include 66-69 (CGIT), threonine 81, and 104-106 (NVT). A 'HIGH' region motif is present at residues 68 to 78 (ITPYDATHLGH). Positions 206 to 211 (EHGGDP) match the 'ERGGDP' region motif. Position 246 (tryptophan 246) interacts with L-cysteinyl-5'-AMP. Cysteine 250 contributes to the Zn(2+) binding site. Position 268–270 (268–270 (GSD)) interacts with L-cysteinyl-5'-AMP. Zn(2+) is bound at residue histidine 275. Valine 302 provides a ligand contact to L-cysteinyl-5'-AMP. The 'KMSKS' region signature appears at 308–312 (KMSKS).

It belongs to the class-I aminoacyl-tRNA synthetase family. MshC subfamily. In terms of assembly, monomer. It depends on Zn(2+) as a cofactor.

It carries out the reaction 1D-myo-inositol 2-amino-2-deoxy-alpha-D-glucopyranoside + L-cysteine + ATP = 1D-myo-inositol 2-(L-cysteinylamino)-2-deoxy-alpha-D-glucopyranoside + AMP + diphosphate + H(+). Its function is as follows. Catalyzes the ATP-dependent condensation of GlcN-Ins and L-cysteine to form L-Cys-GlcN-Ins. The polypeptide is L-cysteine:1D-myo-inositol 2-amino-2-deoxy-alpha-D-glucopyranoside ligase (Parafrankia sp. (strain EAN1pec)).